Here is an 807-residue protein sequence, read N- to C-terminus: uncharacterized protein (807 aa).

One can recognise a Reverse transcriptase domain in the interval 281–566 (IIQSLKSEEF…DKILFLGTNI (286 aa)).

It localises to the mitochondrion. This is an uncharacterized protein from Schizosaccharomyces pombe (strain 972 / ATCC 24843) (Fission yeast).